The primary structure comprises 243 residues: HTH-type quorum sensing-dependent transcriptional regulator RpaR (243 aa).

One can recognise an HTH luxR-type domain in the interval Lys174–Gly239. Positions Ala198 to Ile217 form a DNA-binding region, H-T-H motif.

The protein belongs to the autoinducer-regulated transcriptional regulatory protein family.

Its function is as follows. Responds to the quorum-sensing autoinducer 4-coumaroyl-homoserine lactone to regulate expression of several genes. Represses expression of rpaI in the absence of the inducer. The protein is HTH-type quorum sensing-dependent transcriptional regulator RpaR of Rhodopseudomonas palustris (strain ATCC BAA-98 / CGA009).